The following is a 283-amino-acid chain: Protease HtpX (283 aa).

2 consecutive transmembrane segments (helical) span residues 4 to 24 (ILLF…ILNV) and 33 to 53 (GGIL…SLFL). His139 lines the Zn(2+) pocket. Glu140 is an active-site residue. Residue His143 participates in Zn(2+) binding. Transmembrane regions (helical) follow at residues 147-167 (GDMV…IFLS) and 190-210 (IYFL…SIIA). Glu218 provides a ligand contact to Zn(2+).

Belongs to the peptidase M48B family. Requires Zn(2+) as cofactor.

It is found in the cell inner membrane. This is Protease HtpX from Haemophilus influenzae (strain 86-028NP).